The following is a 404-amino-acid chain: uncharacterized protein (404 aa).

This sequence belongs to the lymphocryptovirus BTRF1 family.

This is an uncharacterized protein from Homo sapiens (Human).